The chain runs to 346 residues: MSADFWCSSQRNKWQLSRQSLLEARRKVLLLERKMIQNGLIKDYPNIHYDFNMRIYLHNLLIKLGRRLNIRQVALATAEIYLNRFLTRVSLKEINVYLLVTTCLYVACKIEECPQHIRLIISEARNLWPEYIPHDVTKLAEFEFYLIEEMDSYLFLHHPYKSLIQIRDFLNENSAVFGFTLTDDELQNAWSLVNDSYITDLHLLLPPHIIAVASIYITIVLKKNLSAIRVNSSAVNSNGGPNSMMFNRNPDQNSMHIDDLMILANPSTPGSDLVNNLERTNFHDMKLDEETIKINKFMNFLDHSHINLDEVVEAMQDMINIYVQWNRYNEQGVKKALQVMLLNRQL.

In terms of domain architecture, Cyclin N-terminal spans Asn59–His158.

It belongs to the cyclin family. Cyclin C subfamily. In terms of assembly, component of the SRB8-11 complex, a regulatory module of the Mediator complex.

The protein localises to the nucleus. Component of the SRB8-11 complex. The SRB8-11 complex is a regulatory module of the Mediator complex which is itself involved in regulation of basal and activated RNA polymerase II-dependent transcription. The SRB8-11 complex may be involved in the transcriptional repression of a subset of genes regulated by Mediator. It may inhibit the association of the Mediator complex with RNA polymerase II to form the holoenzyme complex. The SRB8-11 complex phosphorylates the C-terminal domain (CTD) of the largest subunit of RNA polymerase II. The chain is RNA polymerase II holoenzyme cyclin-like subunit (SSN8) from Scheffersomyces stipitis (strain ATCC 58785 / CBS 6054 / NBRC 10063 / NRRL Y-11545) (Yeast).